Consider the following 212-residue polypeptide: ATP-dependent dethiobiotin synthetase BioD (212 aa).

10–15 is an ATP binding site; sequence GVGKTF. Mg(2+) is bound at residue threonine 14. Lysine 36 is an active-site residue. Substrate is bound at residue serine 40. Residues aspartate 45, 106–109, and 167–168 contribute to the ATP site; these read EGAG and NC. Mg(2+)-binding residues include aspartate 45 and glutamate 106.

Belongs to the dethiobiotin synthetase family. In terms of assembly, homodimer. Requires Mg(2+) as cofactor.

The protein localises to the cytoplasm. The catalysed reaction is (7R,8S)-7,8-diammoniononanoate + CO2 + ATP = (4R,5S)-dethiobiotin + ADP + phosphate + 3 H(+). It functions in the pathway cofactor biosynthesis; biotin biosynthesis; biotin from 7,8-diaminononanoate: step 1/2. Its function is as follows. Catalyzes a mechanistically unusual reaction, the ATP-dependent insertion of CO2 between the N7 and N8 nitrogen atoms of 7,8-diaminopelargonic acid (DAPA, also called 7,8-diammoniononanoate) to form a ureido ring. This is ATP-dependent dethiobiotin synthetase BioD from Methanococcus aeolicus (strain ATCC BAA-1280 / DSM 17508 / OCM 812 / Nankai-3).